The sequence spans 156 residues: Small ribosomal subunit protein uS7c (156 aa).

This sequence belongs to the universal ribosomal protein uS7 family. As to quaternary structure, part of the 30S ribosomal subunit.

The protein resides in the plastid. It is found in the chloroplast. Functionally, one of the primary rRNA binding proteins, it binds directly to 16S rRNA where it nucleates assembly of the head domain of the 30S subunit. The polypeptide is Small ribosomal subunit protein uS7c (rps7) (Phaeodactylum tricornutum (strain CCAP 1055/1)).